The following is a 181-amino-acid chain: ATP synthase subunit b, chloroplastic (181 aa).

A helical transmembrane segment spans residues 27–49; sequence LATNPINLSVVLGVVIYFGKGVL.

This sequence belongs to the ATPase B chain family. As to quaternary structure, F-type ATPases have 2 components, F(1) - the catalytic core - and F(0) - the membrane proton channel. F(1) has five subunits: alpha(3), beta(3), gamma(1), delta(1), epsilon(1). F(0) has four main subunits: a(1), b(1), b'(1) and c(10-14). The alpha and beta chains form an alternating ring which encloses part of the gamma chain. F(1) is attached to F(0) by a central stalk formed by the gamma and epsilon chains, while a peripheral stalk is formed by the delta, b and b' chains.

It localises to the plastid. The protein resides in the chloroplast thylakoid membrane. In terms of biological role, f(1)F(0) ATP synthase produces ATP from ADP in the presence of a proton or sodium gradient. F-type ATPases consist of two structural domains, F(1) containing the extramembraneous catalytic core and F(0) containing the membrane proton channel, linked together by a central stalk and a peripheral stalk. During catalysis, ATP synthesis in the catalytic domain of F(1) is coupled via a rotary mechanism of the central stalk subunits to proton translocation. Functionally, component of the F(0) channel, it forms part of the peripheral stalk, linking F(1) to F(0). This is ATP synthase subunit b, chloroplastic from Lemna minor (Common duckweed).